A 417-amino-acid polypeptide reads, in one-letter code: NADH-quinone oxidoreductase subunit D (417 aa).

The protein belongs to the complex I 49 kDa subunit family. NDH-1 is composed of 14 different subunits. Subunits NuoB, C, D, E, F, and G constitute the peripheral sector of the complex.

The protein localises to the cell inner membrane. It catalyses the reaction a quinone + NADH + 5 H(+)(in) = a quinol + NAD(+) + 4 H(+)(out). Functionally, NDH-1 shuttles electrons from NADH, via FMN and iron-sulfur (Fe-S) centers, to quinones in the respiratory chain. The immediate electron acceptor for the enzyme in this species is believed to be ubiquinone. Couples the redox reaction to proton translocation (for every two electrons transferred, four hydrogen ions are translocated across the cytoplasmic membrane), and thus conserves the redox energy in a proton gradient. The sequence is that of NADH-quinone oxidoreductase subunit D from Burkholderia ambifaria (strain MC40-6).